We begin with the raw amino-acid sequence, 203 residues long: FMN-dependent NADH:quinone oxidoreductase (203 aa).

FMN is bound by residues serine 9, 15 to 17, and 138 to 141; these read SVS and SRGG.

Belongs to the azoreductase type 1 family. In terms of assembly, homodimer. Requires FMN as cofactor.

The enzyme catalyses 2 a quinone + NADH + H(+) = 2 a 1,4-benzosemiquinone + NAD(+). It catalyses the reaction N,N-dimethyl-1,4-phenylenediamine + anthranilate + 2 NAD(+) = 2-(4-dimethylaminophenyl)diazenylbenzoate + 2 NADH + 2 H(+). In terms of biological role, quinone reductase that provides resistance to thiol-specific stress caused by electrophilic quinones. Functionally, also exhibits azoreductase activity. Catalyzes the reductive cleavage of the azo bond in aromatic azo compounds to the corresponding amines. This chain is FMN-dependent NADH:quinone oxidoreductase, found in Methylorubrum extorquens (strain CM4 / NCIMB 13688) (Methylobacterium extorquens).